A 506-amino-acid chain; its full sequence is Flap endonuclease 1 (506 aa).

An N-domain region spans residues 1 to 106 (MGIKGLIPFL…KTLDKRRQKR (106 aa)). Position 34 (Asp-34) interacts with Mg(2+). Residues Arg-47 and Arg-72 each contribute to the DNA site. The Mg(2+) site is built by Asp-88, Glu-160, Glu-162, Asp-181, and Asp-183. The segment at 124–253 (SAKKLVGRTV…KTAYSLVKKY (130 aa)) is I-domain. Glu-160 is a binding site for DNA. Residues Gly-231 and Asp-233 each coordinate DNA. Asp-233 contacts Mg(2+). The segment at 330-338 (IQTSLLSFL) is interaction with PCNA. Residues 338-347 (LTNPQPTNKS) show a composition bias toward polar residues. Residues 338–388 (LTNPQPTNKSKSLDEGPKQSSTEDYKVNTNPSTKGSNVYTTDTNSTKDTKG) form a disordered region. The segment covering 348–363 (KSLDEGPKQSSTEDYK) has biased composition (basic and acidic residues). Residues 364–381 (VNTNPSTKGSNVYTTDTN) show a composition bias toward polar residues.

It belongs to the XPG/RAD2 endonuclease family. FEN1 subfamily. In terms of assembly, interacts with PCNA. Three molecules of FEN1 bind to one PCNA trimer with each molecule binding to one PCNA monomer. PCNA stimulates the nuclease activity without altering cleavage specificity. Requires Mg(2+) as cofactor. Phosphorylated. Phosphorylation upon DNA damage induces relocalization to the nuclear plasma.

It is found in the nucleus. Its subcellular location is the nucleolus. It localises to the nucleoplasm. The protein localises to the mitochondrion. Its function is as follows. Structure-specific nuclease with 5'-flap endonuclease and 5'-3' exonuclease activities involved in DNA replication and repair. During DNA replication, cleaves the 5'-overhanging flap structure that is generated by displacement synthesis when DNA polymerase encounters the 5'-end of a downstream Okazaki fragment. It enters the flap from the 5'-end and then tracks to cleave the flap base, leaving a nick for ligation. Also involved in the long patch base excision repair (LP-BER) pathway, by cleaving within the apurinic/apyrimidinic (AP) site-terminated flap. Acts as a genome stabilization factor that prevents flaps from equilibrating into structures that lead to duplications and deletions. Also possesses 5'-3' exonuclease activity on nicked or gapped double-stranded DNA, and exhibits RNase H activity. Also involved in replication and repair of rDNA and in repairing mitochondrial DNA. The protein is Flap endonuclease 1 of Theileria annulata.